The following is a 245-amino-acid chain: DNA repair protein RecO (245 aa).

This sequence belongs to the RecO family.

Its function is as follows. Involved in DNA repair and RecF pathway recombination. The protein is DNA repair protein RecO of Pectobacterium atrosepticum (strain SCRI 1043 / ATCC BAA-672) (Erwinia carotovora subsp. atroseptica).